A 533-amino-acid chain; its full sequence is MPAKDKRKDKRKDKRKGKNKGKEPKKIIKSDEPAIERAKANASLWEARLEVTELSRIEYRDTSRRLAKNNEDLKKQQYNMEKDIMSVLSYLKKQDQEKDNMIEKLKQQLAKTKEKAQEEKEKLEQKYALQVSELEGQFHQKAKEIGMIQTELKTIKQFQKRKIQVEKELDDLKENLRNSEKNYQETLRRLESRFFEEKHRLEQEAEKRIIMLAERAHHEAVVQLNTAGRNVFKENVYLHKALAYHLKEAEILQQNSKKIEENHSCLLQQKEINDLLVKEKIMQLTQQKSQIQTLQKKVVSLENALTYMTTEFEAEVLKLQQKAIIENQAGLVEIDKLQQLLQMKDREMNRVKRLAKNILDERTEVEQFFLDALYEVKQQILASRKHYKQIAQAAFNLKMRAACAGKTEYPRIRTFDGKEQSTNSVNQDLLEAEKWPTTQKNVDIRDLTWEQKEKVLRLLFAKMNGFAARKYSQSSKPPVPDHIIYGSGEMKETGDENNLLDQTFITQQAPVSDSNRMVSPDVIPQGLQDSDIA.

The segment at 1–30 (MPAKDKRKDKRKDKRKGKNKGKEPKKIIKS) is disordered. The segment covering 7 to 19 (RKDKRKDKRKGKN) has biased composition (basic residues). Residues 20 to 30 (KGKEPKKIIKS) are compositionally biased toward basic and acidic residues. 2 coiled-coil regions span residues 34–207 (AIER…EAEK) and 246–368 (LKEA…VEQF). The interval 277–533 (VKEKIMQLTQ…PQGLQDSDIA (257 aa)) is interaction with MNS1 and ODF2. Polar residues predominate over residues 507–517 (QQAPVSDSNRM). The tract at residues 507–533 (QQAPVSDSNRMVSPDVIPQGLQDSDIA) is disordered.

It belongs to the BBOF1 family. In terms of assembly, interacts with MNS1 and ODF2. Expressed exclusively in the testis and predominantly expressed in male germ cells.

It localises to the cytoplasm. The protein localises to the cytoskeleton. It is found in the cilium basal body. Its subcellular location is the flagellum axoneme. In terms of biological role, plays an essential role in sperm motility and male fertility by stabilizing the sperm flagellar axonemal structure. May be required for the stability of ODF2 and MANS1 proteins. Dispensable for the assembly and function of motile cilia. The protein is Basal body-orientation factor 1 of Mus musculus (Mouse).